The following is a 206-amino-acid chain: Ribosomal RNA small subunit methyltransferase G (206 aa).

S-adenosyl-L-methionine is bound by residues Gly74, Leu79, 125-126, and Arg140; that span reads VE.

It belongs to the methyltransferase superfamily. RNA methyltransferase RsmG family.

The protein localises to the cytoplasm. The enzyme catalyses guanosine(527) in 16S rRNA + S-adenosyl-L-methionine = N(7)-methylguanosine(527) in 16S rRNA + S-adenosyl-L-homocysteine. Functionally, specifically methylates the N7 position of guanine in position 527 of 16S rRNA. The sequence is that of Ribosomal RNA small subunit methyltransferase G from Shewanella woodyi (strain ATCC 51908 / MS32).